Consider the following 188-residue polypeptide: Elongation factor P (188 aa).

It belongs to the elongation factor P family.

The protein localises to the cytoplasm. It functions in the pathway protein biosynthesis; polypeptide chain elongation. Its function is as follows. Involved in peptide bond synthesis. Stimulates efficient translation and peptide-bond synthesis on native or reconstituted 70S ribosomes in vitro. Probably functions indirectly by altering the affinity of the ribosome for aminoacyl-tRNA, thus increasing their reactivity as acceptors for peptidyl transferase. The polypeptide is Elongation factor P (Bacteroides fragilis (strain ATCC 25285 / DSM 2151 / CCUG 4856 / JCM 11019 / LMG 10263 / NCTC 9343 / Onslow / VPI 2553 / EN-2)).